We begin with the raw amino-acid sequence, 333 residues long: D-2-hydroxyacid dehydrogenase (NAD+) (333 aa).

Residue tyrosine 100 coordinates 4-methyl-2-oxopentanoate. Histidine 155, isoleucine 156, aspartate 175, valine 205, asparagine 211, threonine 232, arginine 234, and aspartate 258 together coordinate NAD(+). Residue arginine 234 is part of the active site. The active site involves glutamate 263. Residue histidine 295 participates in 4-methyl-2-oxopentanoate binding. Histidine 295 functions as the Proton donor in the catalytic mechanism.

This sequence belongs to the D-isomer specific 2-hydroxyacid dehydrogenase family. As to quaternary structure, homodimer.

It catalyses the reaction a (2R)-2-hydroxycarboxylate + NAD(+) = a 2-oxocarboxylate + NADH + H(+). The catalysed reaction is (2R)-hydroxy-4-methylpentanoate + NAD(+) = 4-methyl-2-oxopentanoate + NADH + H(+). It carries out the reaction (R)-3-phenyllactate + NAD(+) = 3-phenylpyruvate + NADH + H(+). Its activity is regulated as follows. Completely inhibited In the presence of 0.1 mM Hg(2+). No influence on the activity could be detected with Mg(2+) and Ca(2+) and only very weak effects with Cd(2+), Co(2+) and Mn(2+). Reducing agents and thiol group reagents do not affect catalytic activity. Functionally, catalyzes the NADH-dependent reversible reduction of various 2-ketocarboxylic acids to the corresponding D-2-hydroxycarboxylic acids. In vitro can use various substrates, including 4-methyl-2-oxopentanoate (2-oxoisocaproate), 2-oxopentanoate, 2-oxohexanoate and phenylpyruvate. The protein is D-2-hydroxyacid dehydrogenase (NAD+) of Lacticaseibacillus paracasei (Lactobacillus paracasei).